We begin with the raw amino-acid sequence, 569 residues long: MNKKFKKIVTEKKLTDAERIKENSNYLRGTITDDLKNEITNGFTGDNFSLIRFHGMYQQDDRDLRIERNEQKLEPRYAMMLRCRLPGGVIKAKKWLKIDYFASKYTLYGTIRLTNRQTFQFHGILKKNLKDVHKMLHSIGLDSLATANDVNRNVLCTSNPMESLIHQEAYEWARKISNFLLPHTKAYAEIWLDQKKIVTTEKEPILGKTYLPRKFKTTVVIPPYNDVDLYANDMNFVAITKNEKIIGFNILIGGGLSFIHGNKNTWPFLATEIGYISVENTLSIAKAIVTTQRDWGNRTDRANAKTRYTINNFGLNEFKKEIEKRANVNLKPVREYSFISRGDRFGWIKDINNNWSLTLFIQNGRIYDDNNKLFKSGLLKIANIHDGNFRITSNQNIIISEVSEKNKNKIEKIALSSGLINKSTNLRKNSMACVSFPTCPLAMAEAERMLSFFITQLENIMLKYGVEDEVIILRVSGCPNGCGRSLLAEIGLIGKSIGRYNLYIGGNRIGNRIPKIYKENITEQEILMHLKYLIKTWSNERKNKEDFGDFIVRKEFVKEVINPVYDFWS.

Residues Cys433, Cys439, Cys478, and Cys482 each contribute to the [4Fe-4S] cluster site. Cys482 is a binding site for siroheme.

This sequence belongs to the nitrite and sulfite reductase 4Fe-4S domain family. In terms of assembly, alpha(8)-beta(8). The alpha component is a flavoprotein, the beta component is a hemoprotein. Siroheme serves as cofactor. The cofactor is [4Fe-4S] cluster.

It carries out the reaction hydrogen sulfide + 3 NADP(+) + 3 H2O = sulfite + 3 NADPH + 4 H(+). Its pathway is sulfur metabolism; hydrogen sulfide biosynthesis; hydrogen sulfide from sulfite (NADPH route): step 1/1. Its function is as follows. Component of the sulfite reductase complex that catalyzes the 6-electron reduction of sulfite to sulfide. This is one of several activities required for the biosynthesis of L-cysteine from sulfate. This is Sulfite reductase [NADPH] hemoprotein beta-component from Buchnera aphidicola subsp. Acyrthosiphon pisum (strain Tuc7).